An 86-amino-acid polypeptide reads, in one-letter code: Progonadoliberin-2 (86 aa).

The first 24 residues, M1–S24, serve as a signal peptide directing secretion. Position 25 is a pyrrolidone carboxylic acid (Q25). G34 bears the Glycine amide mark.

It belongs to the GnRH family.

The protein localises to the secreted. Stimulates the secretion of gonadotropins. The sequence is that of Progonadoliberin-2 (gnrh2) from Clarias gariepinus (North African catfish).